Reading from the N-terminus, the 200-residue chain is NADH-quinone oxidoreductase subunit C (200 aa).

It belongs to the complex I 30 kDa subunit family. As to quaternary structure, NDH-1 is composed of 14 different subunits. Subunits NuoB, C, D, E, F, and G constitute the peripheral sector of the complex.

The protein localises to the cell inner membrane. It carries out the reaction a quinone + NADH + 5 H(+)(in) = a quinol + NAD(+) + 4 H(+)(out). In terms of biological role, NDH-1 shuttles electrons from NADH, via FMN and iron-sulfur (Fe-S) centers, to quinones in the respiratory chain. The immediate electron acceptor for the enzyme in this species is believed to be ubiquinone. Couples the redox reaction to proton translocation (for every two electrons transferred, four hydrogen ions are translocated across the cytoplasmic membrane), and thus conserves the redox energy in a proton gradient. The protein is NADH-quinone oxidoreductase subunit C of Paraburkholderia xenovorans (strain LB400).